A 483-amino-acid polypeptide reads, in one-letter code: Malonate-semialdehyde dehydrogenase 2 (483 aa).

Positions 152, 176, 179, 180, and 229 each coordinate NAD(+). Cys-284 (nucleophile) is an active-site residue. Glu-384 is an NAD(+) binding site.

This sequence belongs to the aldehyde dehydrogenase family. IolA subfamily. In terms of assembly, homotetramer.

The catalysed reaction is 3-oxopropanoate + NAD(+) + CoA + H2O = hydrogencarbonate + acetyl-CoA + NADH + H(+). The enzyme catalyses 2-methyl-3-oxopropanoate + NAD(+) + CoA + H2O = propanoyl-CoA + hydrogencarbonate + NADH + H(+). Its pathway is polyol metabolism; myo-inositol degradation into acetyl-CoA; acetyl-CoA from myo-inositol: step 7/7. In terms of biological role, catalyzes the oxidation of malonate semialdehyde (MSA) and methylmalonate semialdehyde (MMSA) into acetyl-CoA and propanoyl-CoA, respectively. Is involved in a myo-inositol catabolic pathway. Bicarbonate, and not CO2, is the end-product of the enzymatic reaction. The sequence is that of Malonate-semialdehyde dehydrogenase 2 from Bacillus mycoides (strain KBAB4) (Bacillus weihenstephanensis).